The primary structure comprises 139 residues: uncharacterized protein (139 aa).

An HIT domain is found at 3–110; sequence IFCNIVEGRD…VPTWSQDPDI (108 aa). The Histidine triad motif signature appears at 95–99; that stretch reads HSHFH.

This is an uncharacterized protein from Saccharolobus solfataricus (strain ATCC 35092 / DSM 1617 / JCM 11322 / P2) (Sulfolobus solfataricus).